A 194-amino-acid polypeptide reads, in one-letter code: Peptidyl-tRNA hydrolase (194 aa).

Tyrosine 17 provides a ligand contact to tRNA. Histidine 22 acts as the Proton acceptor in catalysis. 3 residues coordinate tRNA: phenylalanine 68, asparagine 70, and asparagine 116.

Belongs to the PTH family. Monomer.

Its subcellular location is the cytoplasm. It carries out the reaction an N-acyl-L-alpha-aminoacyl-tRNA + H2O = an N-acyl-L-amino acid + a tRNA + H(+). Hydrolyzes ribosome-free peptidyl-tRNAs (with 1 or more amino acids incorporated), which drop off the ribosome during protein synthesis, or as a result of ribosome stalling. Its function is as follows. Catalyzes the release of premature peptidyl moieties from peptidyl-tRNA molecules trapped in stalled 50S ribosomal subunits, and thus maintains levels of free tRNAs and 50S ribosomes. In Proteus mirabilis (strain HI4320), this protein is Peptidyl-tRNA hydrolase.